Here is a 72-residue protein sequence, read N- to C-terminus: Translation initiation factor IF-1 (72 aa).

Positions 1 to 72 constitute an S1-like domain; it reads MAKSDVIEVD…DKGRITYRYK (72 aa).

Belongs to the IF-1 family. In terms of assembly, component of the 30S ribosomal translation pre-initiation complex which assembles on the 30S ribosome in the order IF-2 and IF-3, IF-1 and N-formylmethionyl-tRNA(fMet); mRNA recruitment can occur at any time during PIC assembly.

The protein localises to the cytoplasm. In terms of biological role, one of the essential components for the initiation of protein synthesis. Stabilizes the binding of IF-2 and IF-3 on the 30S subunit to which N-formylmethionyl-tRNA(fMet) subsequently binds. Helps modulate mRNA selection, yielding the 30S pre-initiation complex (PIC). Upon addition of the 50S ribosomal subunit IF-1, IF-2 and IF-3 are released leaving the mature 70S translation initiation complex. The chain is Translation initiation factor IF-1 from Sulfurimonas denitrificans (strain ATCC 33889 / DSM 1251) (Thiomicrospira denitrificans (strain ATCC 33889 / DSM 1251)).